A 781-amino-acid chain; its full sequence is Homeobox protein SIX4 (781 aa).

Positions 1–10 are enriched in polar residues; that stretch reads MSSSSPTGQI. Disordered stretches follow at residues 1 to 55 and 270 to 321; these read MSSS…PLEP and WFKN…GITN. Serine 2 carries the N-acetylserine modification. The segment at residues 223–282 is a DNA-binding region (homeobox); it reads GEETVYCFKEKSRNALKELYKQNRYPSPAEKRHLAKITGLSLTQVSNWFKNRRQRDRNPS. 2 stretches are compositionally biased toward basic and acidic residues: residues 278-290 and 299-308; these read DRNPSETQSKSES and ESSKGHEDLS. Serine 640 is subject to Phosphoserine.

This sequence belongs to the SIX/Sine oculis homeobox family. As to quaternary structure, interacts with EYA3; acts cooperatively with EYA3 to transactivate target genes through interaction and nuclear translocation of EYA3 protein.

The protein localises to the nucleus. It localises to the cytoplasm. Its function is as follows. Transcriptional regulator which can act as both a transcriptional repressor and activator by binding a DNA sequence on these target genes and is involved in processes like cell differentiation, cell migration and cell survival. Transactivates gene expression by binding a 5'-[CAT]A[CT][CT][CTG]GA[GAT]-3' motif present in the Trex site and a 5'-TCA[AG][AG]TTNC-3' motif present in the MEF3 site of the muscle-specific genes enhancer. Acts cooperatively with EYA proteins to transactivate their target genes through interaction and nuclear translocation of EYA protein. Acts synergistically with SIX1 to regulate target genes involved in formation of various organs, including muscle, kidney, gonad, ganglia, olfactory epithelium and cranial skeleton. Plays a role in several important steps of muscle development. Controls the genesis of hypaxial myogenic progenitors in the dermomyotome by transactivating PAX3 and the delamination and migration of the hypaxial precursors from the ventral lip to the limb buds through the transactivation of PAX3, MET and LBX1. Controls myoblast determination by transactivating MYF5, MYOD1 and MYF6. Controls somitic differentiation in myocyte through MYOG transactivation. Plays a role in synaptogenesis and sarcomere organization by participating in myofiber specialization during embryogenesis by activating fast muscle program in the primary myotome resulting in an up-regulation of fast muscle genes, including ATP2A1, MYL1 and TNNT3. Simultaneously, is also able to activate inhibitors of slow muscle genes, such as SOX6, HRASLS, and HDAC4, thereby restricting the activation of the slow muscle genes. During muscle regeneration, negatively regulates differentiation of muscle satellite cells through down-regulation of MYOG expression. During kidney development regulates the early stages of metanephros development and ureteric bud formation through regulation of GDNF, SALL1, PAX8 and PAX2 expression. Plays a role in gonad development by regulating both testis determination and size determination. In gonadal sex determination, transactivates ZFPM2 by binding a MEF3 consensus sequence, resulting in SRY up-regulation. In gonadal size determination, transactivates NR5A1 by binding a MEF3 consensus sequence resulting in gonadal precursor cell formation regulation. During olfactory development mediates the specification and patterning of olfactory placode through fibroblast growth factor and BMP4 signaling pathways and also regulates epithelial cell proliferation during placode formation. Promotes survival of sensory neurons during early trigeminal gangliogenesis. In the developing dorsal root ganglia, up-regulates SLC12A2 transcription. Regulates early thymus/parathyroid organogenesis through regulation of GCM2 and FOXN1 expression. Forms gustatory papillae during development of the tongue. Also plays a role during embryonic cranial skeleton morphogenesis. This Homo sapiens (Human) protein is Homeobox protein SIX4 (SIX4).